Here is a 378-residue protein sequence, read N- to C-terminus: Chloroplast stem-loop binding protein of 41 kDa b, chloroplastic (378 aa).

The N-terminal 50 residues, 1-50 (MAKMMMLQQHQPSFSLLTSSLSDFNGAKLHLQVQYKRKVHQPKGALYVSA), are a transit peptide targeting the chloroplast. A Phosphoserine modification is found at serine 240.

Belongs to the NAD(P)-dependent epimerase/dehydratase family. Component of a complex made of CSP41A, CSP41B, ribosomes, and the plastid-encoded RNA polymerase. Interacts with CSP41A. Binds DNA when in complex with PRIN2. As to expression, highly expressed in seedlings, particularly in photosynthetically active organs. Mostly expressed in young and mature leaves, and, to a lower extent, in flowers. Low expression in etiolated seedlings compared to green seedlings.

Its subcellular location is the plastid. The protein localises to the chloroplast. The protein resides in the plastoglobule. It localises to the cytoplasm. Its function is as follows. Binds and cleaves RNA, particularly in stem-loops. Associates with pre-ribosomal particles in chloroplasts, and participates in chloroplast ribosomal RNA metabolism, probably during the final steps of 23S rRNA maturation. May enhance transcription by the plastid-encoded polymerase and translation in plastid via the stabilization of ribosome assembly intermediates. Required for chloroplast integrity. Involved in the regulation of the circadian system. Involved in the regulation of heteroglycans and monosaccharide mobilization. Required for full expression of genes transcribed by the plastid-encoded RNA polymerase (PEP). Essential for embryo development. In Arabidopsis thaliana (Mouse-ear cress), this protein is Chloroplast stem-loop binding protein of 41 kDa b, chloroplastic (CSP41B).